A 545-amino-acid chain; its full sequence is Membrane protein insertase YidC (545 aa).

The next 6 helical transmembrane spans lie at 10–30, 319–339, 341–361, 407–427, 467–487, and 502–522; these read AVYL…FLFS, LLYF…NVIP, WGLS…PLTF, IGGC…YGLV, ILPF…SNVS, and MPIM…IYWI.

Belongs to the OXA1/ALB3/YidC family. Type 1 subfamily. In terms of assembly, interacts with the Sec translocase complex via SecD. Specifically interacts with transmembrane segments of nascent integral membrane proteins during membrane integration.

The protein localises to the cell inner membrane. In terms of biological role, required for the insertion and/or proper folding and/or complex formation of integral membrane proteins into the membrane. Involved in integration of membrane proteins that insert both dependently and independently of the Sec translocase complex, as well as at least some lipoproteins. Aids folding of multispanning membrane proteins. The chain is Membrane protein insertase YidC from Borrelia recurrentis (strain A1).